The following is a 301-amino-acid chain: tRNA dimethylallyltransferase (301 aa).

Residue 8–15 (GPTAVGKT) coordinates ATP. 10–15 (TAVGKT) is a substrate binding site. The interval 33–36 (DSRQ) is interaction with substrate tRNA.

This sequence belongs to the IPP transferase family. Monomer. Requires Mg(2+) as cofactor.

It carries out the reaction adenosine(37) in tRNA + dimethylallyl diphosphate = N(6)-dimethylallyladenosine(37) in tRNA + diphosphate. Functionally, catalyzes the transfer of a dimethylallyl group onto the adenine at position 37 in tRNAs that read codons beginning with uridine, leading to the formation of N6-(dimethylallyl)adenosine (i(6)A). The polypeptide is tRNA dimethylallyltransferase (Thermosipho melanesiensis (strain DSM 12029 / CIP 104789 / BI429)).